The chain runs to 210 residues: Pre-mRNA-splicing factor 38 (210 aa).

Positions 181-210 are disordered; it reads PLSSSSDEEDDDEEQISKLESNEGAVDRNI. Over residues 195–210 the composition is skewed to basic and acidic residues; the sequence is QISKLESNEGAVDRNI.

This sequence belongs to the PRP38 family. Component of the 25S U4/U6.U5 tri-snRNP particle, a subcomplex of the spliceosome.

The protein localises to the nucleus. Functionally, required for pre-mRNA splicing and maintenance of stable U6 small nuclear RNA levels. Implicated in the formation of stable and biologically active snRNP structures. As part of the U4/U6.U5 tri-snRNP particle, dispensible for spliceosome assembly, but required for conformational changes, which result in U4 snRNA release and the subsequent catalytic activation of the spliceosome. In Schizosaccharomyces pombe (strain 972 / ATCC 24843) (Fission yeast), this protein is Pre-mRNA-splicing factor 38.